Reading from the N-terminus, the 465-residue chain is A-type ATP synthase subunit B (465 aa).

The protein belongs to the ATPase alpha/beta chains family. Has multiple subunits with at least A(3), B(3), C, D, E, F, H, I and proteolipid K(x).

Its subcellular location is the cell membrane. Component of the A-type ATP synthase that produces ATP from ADP in the presence of a proton gradient across the membrane. The B chain is a regulatory subunit. This is A-type ATP synthase subunit B from Thermococcus onnurineus (strain NA1).